The primary structure comprises 513 residues: Glycerol-3-phosphate dehydrogenase (513 aa).

16-44 lines the FAD pocket; the sequence is DVAVIGGGINGVGIAADAAGRGLSVFLCE.

It belongs to the FAD-dependent glycerol-3-phosphate dehydrogenase family. It depends on FAD as a cofactor.

Its subcellular location is the cytoplasm. It catalyses the reaction a quinone + sn-glycerol 3-phosphate = dihydroxyacetone phosphate + a quinol. The chain is Glycerol-3-phosphate dehydrogenase (glpD) from Pseudomonas tolaasii.